The following is a 245-amino-acid chain: AA9 family lytic polysaccharide monooxygenase B (245 aa).

Positions 1-18 are cleaved as a signal peptide; that stretch reads MKSAIFAAAVLGAAGVSA. Cu(2+) is bound by residues H19 and H105. A disulfide bridge links C116 with C120. O2-binding residues include H179 and Q188. Cu(2+) is bound at residue Y190.

The protein belongs to the polysaccharide monooxygenase AA9 family. Requires Cu(2+) as cofactor.

It is found in the secreted. The catalysed reaction is [(1-&gt;4)-beta-D-glucosyl]n+m + reduced acceptor + O2 = 4-dehydro-beta-D-glucosyl-[(1-&gt;4)-beta-D-glucosyl]n-1 + [(1-&gt;4)-beta-D-glucosyl]m + acceptor + H2O.. Its function is as follows. Lytic polysaccharide monooxygenase (LPMO) that depolymerizes crystalline and amorphous polysaccharides via the oxidation of scissile alpha- or beta-(1-4)-glycosidic bonds, yielding C1 or C4 oxidation products. Catalysis by LPMOs requires the reduction of the active-site copper from Cu(II) to Cu(I) by a reducing agent and H(2)O(2) or O(2) as a cosubstrate. Active on hemicelluloses, including xylan, glucomannan, and xyloglucan. Has no activity on ivory nut mannan (INM), a linear beta-1,4-linked mannan without substitutions. The polypeptide is AA9 family lytic polysaccharide monooxygenase B (Malbranchea cinnamomea (Thermophilic fungus)).